The primary structure comprises 663 residues: Beta-galactosidase YesZ (663 aa).

Arg-106 contributes to the substrate binding site. Zn(2+) is bound at residue Cys-110. Asn-144 is a binding site for substrate. The Proton donor role is filled by Glu-145. Residues Cys-153, Cys-155, and Cys-158 each contribute to the Zn(2+) site. Glu-296 (nucleophile) is an active-site residue. 345 to 348 (EISH) contacts substrate.

The protein belongs to the glycosyl hydrolase 42 family. Homotrimer.

The enzyme catalyses Hydrolysis of terminal non-reducing beta-D-galactose residues in beta-D-galactosides.. Functionally, may play a role in the degradation of rhamnogalacturonan derived from plant cell walls. The chain is Beta-galactosidase YesZ (yesZ) from Bacillus subtilis (strain 168).